We begin with the raw amino-acid sequence, 148 residues long: Cofilin/actin-depolymerizing factor homolog (148 aa).

An ADF-H domain is found at 4 to 143; that stretch reads GVTVSDVCKT…SREAVEEKLR (140 aa). Residues 19 to 23 carry the Nuclear localization signal motif; that stretch reads KKDKK.

It belongs to the actin-binding proteins ADF family. In terms of processing, phosphorylated in vitro by protein kinase LIMK1. Phosphorylation is required for inactivation of tsr and for cell proliferation and axon growth. Phosphorylation is negatively regulated by the panthothenate kinase fbl which catalyzes the first step in the conversion of panthothenic acid to coenzyme A. Dephosphorylated by protein phosphatase ssh which activates tsr.

Its subcellular location is the cytoplasm. It localises to the cytoskeleton. The protein localises to the nucleus matrix. In terms of biological role, exhibits F-actin depolymerizing activity and regulates actin cytoskeleton dynamics. Required for cytokinesis in both mitotic and meiotic cells and for aster migration and separation. Promotes cell motility during ovary development and oogenesis. During larval development, required for the cell rearrangement needed for formation of terminal filaments which are stacks of somatic cells that are important for the initiation of ovarioles. Also required for border cell migration during oogenesis. During border cell migration, required for actin turnover and lamellipodial protrusion. Required for the establishment of planar cell polarity (PCP) where cells adopt a uniform orientation within the plane of an epithelium. During establishment of PCP, required for the redistribution of the PCP core proteins fz and stan/fmi to the proximodistal cell boundary. During pupal development, required for elongation of the retinal cell body and for rhabdomere morphogenesis. Required for mushroom body neuroblast proliferation and axon growth. Plays a role in the positive regulation of protein secretion. Plays a role in the regulation of nuclear localization of actin. Required for the maintenance of epithelial integrity by controlling cell junctions and is also necessary for cell survival and tissue growth through regulation of JNK and yki signaling. This Drosophila melanogaster (Fruit fly) protein is Cofilin/actin-depolymerizing factor homolog.